The chain runs to 91 residues: Heat shock protein 30E (91 aa).

The tract at residues 62 to 91 (RDQIRQPGAPESEGTSPNTGKDGKDPGNSL) is disordered. A compositionally biased stretch (basic and acidic residues) spans 82 to 91 (KDGKDPGNSL).

The protein belongs to the small heat shock protein (HSP20) family.

The chain is Heat shock protein 30E (hsp30e) from Xenopus laevis (African clawed frog).